The chain runs to 537 residues: Chaperonin GroEL (537 aa).

ATP is bound by residues Thr-29–Pro-32, Asp-86–Thr-90, Gly-413, and Asp-492.

Belongs to the chaperonin (HSP60) family. Forms a cylinder of 14 subunits composed of two heptameric rings stacked back-to-back. Interacts with the co-chaperonin GroES.

It is found in the cytoplasm. It catalyses the reaction ATP + H2O + a folded polypeptide = ADP + phosphate + an unfolded polypeptide.. Functionally, together with its co-chaperonin GroES, plays an essential role in assisting protein folding. The GroEL-GroES system forms a nano-cage that allows encapsulation of the non-native substrate proteins and provides a physical environment optimized to promote and accelerate protein folding. The protein is Chaperonin GroEL of Dehalococcoides mccartyi (strain CBDB1).